The following is a 274-amino-acid chain: Large ribosomal subunit protein uL2cz/uL2cy (274 aa).

Disordered regions lie at residues 1–26 (MAIH…KSNP) and 223–274 (MNPV…RRSK).

Belongs to the universal ribosomal protein uL2 family. As to quaternary structure, part of the 50S ribosomal subunit.

It is found in the plastid. Its subcellular location is the chloroplast. In Daucus carota (Wild carrot), this protein is Large ribosomal subunit protein uL2cz/uL2cy (rpl2-A).